The chain runs to 214 residues: Neuromodulin (214 aa).

Residues 1–214 (MLCCMRRTKQ…EEAKPDQENA (214 aa)) are disordered. 2 S-palmitoyl cysteine lipidation sites follow: cysteine 3 and cysteine 4. Composition is skewed to basic and acidic residues over residues 9–33 (KQVEKNEDGDQKIDQDGNKPEDKAH), 52–88 (MKDDKKDDNSEEAVENHKGEAKDEAATTENKTPKTEE), and 95–122 (LEVKKEAISSPAEDKKQEPSSEKPKDTP). The IQ domain maps to 32–61 (AHKAATKIQASFRGHIIRKKMKDDKKDDNS). Residues 124-133 (EENQASAESE) are compositionally biased toward low complexity. 3 stretches are compositionally biased toward basic and acidic residues: residues 150–160 (QAKEESKKADV), 168–193 (ASEKEQEKAESSQEDVKKDEVEEIKA), and 205–214 (EEAKPDQENA).

This sequence belongs to the neuromodulin family. As to quaternary structure, binds calmodulin with a greater affinity in the absence of Ca(2+) than in its presence. In terms of processing, palmitoylated. Palmitoylation is essential for plasma membrane association.

Its subcellular location is the cell membrane. The protein localises to the cell projection. The protein resides in the growth cone membrane. It localises to the synapse. It is found in the filopodium membrane. Its function is as follows. This protein is associated with nerve growth. It is a major component of the motile 'growth cones' that form the tips of elongating axons. Plays a role in axonal and dendritic filopodia induction. This chain is Neuromodulin (gap43), found in Xenopus laevis (African clawed frog).